Here is a 352-residue protein sequence, read N- to C-terminus: tRNA uridine(34) hydroxylase (352 aa).

Residues 144-238 (SDPDVILIDT…YLEEVPASDS (95 aa)) enclose the Rhodanese domain. C198 functions as the Cysteine persulfide intermediate in the catalytic mechanism.

The protein belongs to the TrhO family.

It catalyses the reaction uridine(34) in tRNA + AH2 + O2 = 5-hydroxyuridine(34) in tRNA + A + H2O. Functionally, catalyzes oxygen-dependent 5-hydroxyuridine (ho5U) modification at position 34 in tRNAs. The protein is tRNA uridine(34) hydroxylase of Psychrobacter cryohalolentis (strain ATCC BAA-1226 / DSM 17306 / VKM B-2378 / K5).